A 214-amino-acid chain; its full sequence is Ribonuclease T (214 aa).

The Exonuclease domain occupies 20–195; the sequence is VVVDVETAGF…YDTQKTAELF (176 aa). Aspartate 23, glutamate 25, histidine 182, and aspartate 187 together coordinate Mg(2+). Histidine 182 serves as the catalytic Proton donor/acceptor.

The protein belongs to the RNase T family. Homodimer. Mg(2+) serves as cofactor.

Functionally, trims short 3' overhangs of a variety of RNA species, leaving a one or two nucleotide 3' overhang. Responsible for the end-turnover of tRNA: specifically removes the terminal AMP residue from uncharged tRNA (tRNA-C-C-A). Also appears to be involved in tRNA biosynthesis. This Vibrio parahaemolyticus serotype O3:K6 (strain RIMD 2210633) protein is Ribonuclease T.